A 300-amino-acid chain; its full sequence is Urease accessory protein UreD (300 aa).

Belongs to the UreD family. UreD, UreF and UreG form a complex that acts as a GTP-hydrolysis-dependent molecular chaperone, activating the urease apoprotein by helping to assemble the nickel containing metallocenter of UreC. The UreE protein probably delivers the nickel.

It is found in the cytoplasm. Its function is as follows. Required for maturation of urease via the functional incorporation of the urease nickel metallocenter. The sequence is that of Urease accessory protein UreD from Prochlorococcus marinus (strain MIT 9312).